The primary structure comprises 276 residues: 2-dehydro-3-deoxyphosphooctonate aldolase (276 aa).

The protein belongs to the KdsA family.

The protein localises to the cytoplasm. It carries out the reaction D-arabinose 5-phosphate + phosphoenolpyruvate + H2O = 3-deoxy-alpha-D-manno-2-octulosonate-8-phosphate + phosphate. It functions in the pathway carbohydrate biosynthesis; 3-deoxy-D-manno-octulosonate biosynthesis; 3-deoxy-D-manno-octulosonate from D-ribulose 5-phosphate: step 2/3. Its pathway is bacterial outer membrane biogenesis; lipopolysaccharide biosynthesis. In Stenotrophomonas maltophilia (strain R551-3), this protein is 2-dehydro-3-deoxyphosphooctonate aldolase.